We begin with the raw amino-acid sequence, 297 residues long: 4-hydroxy-tetrahydrodipicolinate synthase (297 aa).

T47 serves as a coordination point for pyruvate. Residue Y135 is the Proton donor/acceptor of the active site. K163 (schiff-base intermediate with substrate) is an active-site residue. I205 is a pyruvate binding site.

The protein belongs to the DapA family. Homotetramer; dimer of dimers.

It localises to the cytoplasm. It carries out the reaction L-aspartate 4-semialdehyde + pyruvate = (2S,4S)-4-hydroxy-2,3,4,5-tetrahydrodipicolinate + H2O + H(+). It participates in amino-acid biosynthesis; L-lysine biosynthesis via DAP pathway; (S)-tetrahydrodipicolinate from L-aspartate: step 3/4. Catalyzes the condensation of (S)-aspartate-beta-semialdehyde [(S)-ASA] and pyruvate to 4-hydroxy-tetrahydrodipicolinate (HTPA). This chain is 4-hydroxy-tetrahydrodipicolinate synthase, found in Dehalococcoides mccartyi (strain ATCC BAA-2100 / JCM 16839 / KCTC 5957 / BAV1).